A 436-amino-acid chain; its full sequence is T-box transcription factor T (436 aa).

Positions 51 to 219 form a DNA-binding region, T-box; that stretch reads LWLRFKELTN…YNPFAKAFLD (169 aa).

Monomer. Binds DNA as a monomer.

The protein resides in the nucleus. In terms of biological role, involved in the transcriptional regulation of genes required for mesoderm formation and differentiation. Binds to a palindromic T site 5'-TTCACACCTAGGTGTGAA-3' DNA sequence and activates gene transcription when bound to such a site. This is T-box transcription factor T from Mus musculus (Mouse).